The chain runs to 632 residues: Glycerophosphodiester phosphodiesterase domain-containing protein 4 (632 aa).

Topologically, residues 1 to 64 are cytoplasmic; that stretch reads MEETQDSSSS…GSCCCSRKEQ (64 aa). The helical transmembrane segment at 65–85 threads the bilayer; sequence FFYMCLVIAFILSVLFLFVWV. The Extracellular portion of the chain corresponds to 86–114; that stretch reads ETSNEYNGFDWVVYLGTGCWFFWSILVLS. Residues 115–135 traverse the membrane as a helical segment; that stretch reads AAGIMVAYTTLLLLLGFLLLW. The Cytoplasmic portion of the chain corresponds to 136-147; that stretch reads ERIELNLHTSHK. The helical transmembrane segment at 148-168 threads the bilayer; that stretch reads VFICLVIVLCSFLLAVLSHFW. The Extracellular portion of the chain corresponds to 169-180; sequence KDKWLIAGLSLQ. The chain crosses the membrane as a helical span at residues 181 to 201; it reads IFAPFVHLSLITVMIIISWPL. Over 202 to 240 the chain is Cytoplasmic; that stretch reads SICVARLESEVKVRRYRMADYEQEIQERCNVFQRLRALQ. A helical transmembrane segment spans residues 241–261; the sequence is IAAGLSFLIILLCLYLMPLGI. At 262-542 the chain is on the extracellular side; that stretch reads YSPCILKKEN…SRPLFFMTPG (281 aa). The GP-PDE domain occupies 276–533; the sequence is PTLFGHRGAP…DNIELLNQLS (258 aa). Residues Glu308, Asp310, and His323 each contribute to the a divalent metal cation site. N-linked (GlcNAc...) asparagine glycans are attached at residues Asn343, Asn349, Asn384, and Asn473. A helical membrane pass occupies residues 543–563; the sequence is FYMFMWLFLDIASAVIIGFVF. Residues 564–632 lie on the Cytoplasmic side of the membrane; it reads CYNWIKEIKR…QKTEPKTENL (69 aa). The segment at 596–632 is disordered; that stretch reads ENNDASQQKPEVAPTSANLAPENMIELQKTEPKTENL. Residues 623-632 are compositionally biased toward basic and acidic residues; it reads QKTEPKTENL.

Belongs to the glycerophosphoryl diester phosphodiesterase family. As to expression, detected in testis, in particular in spermatocytes.

Its subcellular location is the cytoplasm. It localises to the membrane. This Mus musculus (Mouse) protein is Glycerophosphodiester phosphodiesterase domain-containing protein 4 (Gdpd4).